A 118-amino-acid chain; its full sequence is MRVKNAVNAKKKRRKILKAVKGYHGALSRRYRLAKQAYIKAKKHAYVGRKLKKRDFRKLWITRINIAARNEGLKYNELIHGLKLAGVAINRKMLSELAVNDPESFKEYVNIAKQAIGK.

Belongs to the bacterial ribosomal protein bL20 family.

Functionally, binds directly to 23S ribosomal RNA and is necessary for the in vitro assembly process of the 50S ribosomal subunit. It is not involved in the protein synthesizing functions of that subunit. The protein is Large ribosomal subunit protein bL20 of Thermosipho africanus (strain TCF52B).